We begin with the raw amino-acid sequence, 1000 residues long: Isoleucine--tRNA ligase, mitochondrial (1000 aa).

The N-terminal 27 residues, 1-27 (MLGAWRAAPRLRLRARFGVASVWARSA), are a transit peptide targeting the mitochondrion. The short motif at 102-112 (PYANGDPHVGH) is the 'HIGH' region element. ATP contacts are provided by K649 and K652. Residues 649-653 (KMSKS) carry the 'KMSKS' region motif.

The protein belongs to the class-I aminoacyl-tRNA synthetase family.

It is found in the mitochondrion matrix. It catalyses the reaction tRNA(Ile) + L-isoleucine + ATP = L-isoleucyl-tRNA(Ile) + AMP + diphosphate. Its function is as follows. Aminoacyl-tRNA synthetase that catalyzes the specific attachment of isoleucine to its cognate tRNA (tRNA(Ile)). The protein is Isoleucine--tRNA ligase, mitochondrial (IARS2) of Gallus gallus (Chicken).